We begin with the raw amino-acid sequence, 824 residues long: Type IV secretion system protein PtlC homolog (824 aa).

An ATP-binding site is contributed by 456-463; that stretch reads GQSGSGKT.

Belongs to the TrbE/VirB4 family.

The protein localises to the cell membrane. The protein is Type IV secretion system protein PtlC homolog (ptlC) of Bordetella bronchiseptica (strain ATCC BAA-588 / NCTC 13252 / RB50) (Alcaligenes bronchisepticus).